Consider the following 613-residue polypeptide: Xaa-Pro aminopeptidase ApepP (613 aa).

Arginine 77 and histidine 388 together coordinate substrate. 3 residues coordinate Mn(2+): aspartate 408, aspartate 419, and histidine 482. Substrate contacts are provided by histidine 482, histidine 491, and glutamate 517. The Mn(2+) site is built by glutamate 517 and glutamate 531.

The protein belongs to the peptidase M24B family. It depends on Mn(2+) as a cofactor. Detected in gut, brain, testes and ovary.

Its subcellular location is the cytoplasm. It catalyses the reaction Release of any N-terminal amino acid, including proline, that is linked to proline, even from a dipeptide or tripeptide.. Its activity is regulated as follows. Inhibited by the chelating agent EDTA. Divalent metal ions have substrate- and concentration-dependent effects on activity. Activity towards bradykinin is inhibited with increasing Mn(2+) concentration. Activity towards substance P is stimulated by low Mn(2+) concentrations (in the range 10 uM-1 mM) but inhibited by Mn(2+) concentrations in excess of 1 mM. Ca(2+), Mg(2+) and Co(2+) stimulate activity towards substance P at concentrations of 10-100 uM but are inhibitory at concentrations of 1 mM. Zn(2+), Ni(2+) and Cu(2+) strongly inhibit activity towards substance P at concentrations of 1 mM. Catalyzes the removal of a penultimate prolyl residue from the N-termini of peptides, such as Arg-Pro-Pro. The chain is Xaa-Pro aminopeptidase ApepP from Drosophila melanogaster (Fruit fly).